A 377-amino-acid chain; its full sequence is Polar flagellin F (377 aa).

Coiled coils occupy residues 98 to 131 (QSANGSNSQVERTALQEEVTALNDELNRIAETTS) and 302 to 339 (DSQRAELGAYQNRFNHAINNLDNIHENLAASNSRIQDT).

Belongs to the bacterial flagellin family. Heteromer of multiple flagellin subunits including FlaA, FlaB/D, FlaC, FlaE and FlaF.

Its subcellular location is the secreted. It is found in the bacterial flagellum. Its function is as follows. Flagellin is the subunit protein which polymerizes to form the filaments of bacterial flagella. The polypeptide is Polar flagellin F (flaF) (Vibrio parahaemolyticus serotype O3:K6 (strain RIMD 2210633)).